A 584-amino-acid chain; its full sequence is Aspartate--tRNA ligase (584 aa).

Glutamate 169 provides a ligand contact to L-aspartate. The aspartate stretch occupies residues 193–196 (QLFK). Position 215 (arginine 215) interacts with L-aspartate. ATP is bound by residues 215–217 (RDE) and glutamine 224. Histidine 446 contacts L-aspartate. ATP is bound at residue glutamate 480. Arginine 487 is a binding site for L-aspartate. 532 to 535 (GLDR) contributes to the ATP binding site.

Belongs to the class-II aminoacyl-tRNA synthetase family. Type 1 subfamily. In terms of assembly, homodimer.

The protein localises to the cytoplasm. It catalyses the reaction tRNA(Asp) + L-aspartate + ATP = L-aspartyl-tRNA(Asp) + AMP + diphosphate. Catalyzes the attachment of L-aspartate to tRNA(Asp) in a two-step reaction: L-aspartate is first activated by ATP to form Asp-AMP and then transferred to the acceptor end of tRNA(Asp). The protein is Aspartate--tRNA ligase of Buchnera aphidicola subsp. Schizaphis graminum (strain Sg).